Here is a 161-residue protein sequence, read N- to C-terminus: Alpha-crystallin A chain (161 aa).

Residues 1–51 (ALGPFYPSRXXXXXXXXXXXXXXXXXXXXXXXXXXXXQSLFRTVLDSGISE) are required for complex formation with BFSP1 and BFSP2. Position 38 is a deamidated glutamine; partial (Gln38). The sHSP domain occupies 40–150 (LFRTVLDSGI…SHSERAIPVS (111 aa)). Lys87 is modified (N6-acetyllysine). Zn(2+) is bound at residue His88. Deamidated asparagine; partial is present on Asn89. Glu90 and His95 together coordinate Zn(2+). Position 110 is a phosphoserine (Ser110). Asn111 is modified (deamidated asparagine; partial). Cys119 and Cys130 form a disulfide bridge. Gln135 is subject to Deamidated glutamine; partial. The disordered stretch occupies residues 140–161 (ASHSERAIPVSREEKPSSAPSS). Residues 141–155 (SHSERAIPVSREEKP) are compositionally biased toward basic and acidic residues. His142 contacts Zn(2+). The O-linked (GlcNAc) serine glycan is linked to Ser150.

It belongs to the small heat shock protein (HSP20) family. In terms of assembly, heteromer composed of three CRYAA and one CRYAB subunits. Inter-subunit bridging via zinc ions enhances stability, which is crucial as there is no protein turn over in the lens. Can also form homodimers and homotetramers (dimers of dimers) which serve as the building blocks of homooligomers. Within homooligomers, the zinc-binding motif is created from residues of 3 different molecules. His-88 and Glu-90 from one molecule are ligands of the zinc ion, and His-95 and His-142 residues from additional molecules complete the site with tetrahedral coordination geometry. Part of a complex required for lens intermediate filament formation composed of BFSP1, BFSP2 and CRYAA. Post-translationally, undergoes age-dependent proteolytical cleavage at the C-terminus.

Its subcellular location is the cytoplasm. It localises to the nucleus. Functionally, contributes to the transparency and refractive index of the lens. In its oxidized form (absence of intramolecular disulfide bond), acts as a chaperone, preventing aggregation of various proteins under a wide range of stress conditions. Required for the correct formation of lens intermediate filaments as part of a complex composed of BFSP1, BFSP2 and CRYAA. The sequence is that of Alpha-crystallin A chain (CRYAA) from Galegeeska rufescens (East African rufous sengi).